Consider the following 2167-residue polypeptide: RNA editing associated helicase 2 (2167 aa).

Residues 1-30 constitute a mitochondrion transit peptide; sequence MRAIRLTVACRYLGPFRSVTLSPVVLPVRL. Disordered stretches follow at residues 503–593 and 937–969; these read RARG…DEAT and ENAT…PTNV. The span at 532-541 shows a compositional bias: low complexity; that stretch reads SSTQTPSSST. Residues 1024 to 1095 form the DRBM domain; the sequence is DAKTVLQRYC…AMHALALLRR (72 aa). The 166-residue stretch at 1348–1513 folds into the Helicase ATP-binding domain; the sequence is LRAISSNQIV…FGNAPIINVE (166 aa). 1361 to 1368 contributes to the ATP binding site; it reads GTTGCGKT. The short motif at 1366 to 1367 is the Important for binding to gRNA element; sequence GK. Residues 1460–1463 carry the DEAH box motif; the sequence is DEIH. One can recognise a Helicase C-terminal domain in the interval 1585 to 1762; the sequence is AIDHAVRSLD…SLCLQILALD (178 aa). The interval 2132–2167 is disordered; it reads IIEPCTEPKGGSSEAEKTHVNSSHTPTTSAEAGGDS. Positions 2151–2161 are enriched in polar residues; it reads VNSSHTPTTSA.

This sequence belongs to the DEAD box helicase family. DEAH subfamily. In terms of assembly, component of the REH2-associated complex (REH2C) composed of helicase REH2, associated factors H2F1 and H2F2, and mRNAs at various editing stages; the formation of the complex is RNA-independent. Within the complex, interacts with H2F1; the interaction is direct. Interacts transiently, in a RNA-dependent manner, with various editing complexes including the RNA editing core (RECC) complex, the gRNA-binding (GRBC) complex (also known as the MRB1 complex) and the RNA editing mediator (REMC) complex. Interacts with GAP1/GRBC2 via RNA forming a variant of the GRBC complex known as REH2-GRBC complex. Interacts with mitochondrial ribosomes.

It is found in the mitochondrion. The catalysed reaction is ATP + H2O = ADP + phosphate + H(+). ATP-dependent RNA helicase that unwinds RNA in a 3' to 5' direction and that plays an important role in mitochondrial mRNA editing, a process involving the addition and deletion of uridine (U) nucleotides in the pre-mRNA. As part of the RET2-containing gRNA-binding (RET2-GRBC) complex, acts as a scaffold for the assembly of mRNA-gRNA hybrids and the recruitment of the RNA editing core (RECC) complex. Regulates several steps of mRNA editing by the MRBC3010/GRBC6 containing gRNA-binding (MRBC3010-GRBC) complex including loading of unedited mRNA, editing in the first sequence block and subsequent editing progression across multiple sequence blocks. Also, regulates the RNA substrate content of the MRBC3010-GRBC complex as well as the association of this complex with mitoribosomes. This Trypanosoma brucei brucei (strain 927/4 GUTat10.1) protein is RNA editing associated helicase 2.